Reading from the N-terminus, the 331-residue chain is Ornithine carbamoyltransferase (331 aa).

Carbamoyl phosphate contacts are provided by residues 55-58 (STRT), glutamine 82, arginine 106, and 133-136 (HPTQ). L-ornithine-binding positions include asparagine 166, aspartate 230, and 234–235 (SM). Residues 272–273 (CL) and arginine 317 contribute to the carbamoyl phosphate site.

Belongs to the aspartate/ornithine carbamoyltransferase superfamily. OTCase family.

It localises to the cytoplasm. The catalysed reaction is carbamoyl phosphate + L-ornithine = L-citrulline + phosphate + H(+). The protein operates within amino-acid biosynthesis; L-arginine biosynthesis; L-arginine from L-ornithine and carbamoyl phosphate: step 1/3. In terms of biological role, reversibly catalyzes the transfer of the carbamoyl group from carbamoyl phosphate (CP) to the N(epsilon) atom of ornithine (ORN) to produce L-citrulline. The sequence is that of Ornithine carbamoyltransferase (argF) from Neisseria meningitidis serogroup A / serotype 4A (strain DSM 15465 / Z2491).